A 273-amino-acid chain; its full sequence is DnaJ homolog subfamily C member 27 (273 aa).

Residues 1-18 (MEANMPKRKEPGRSLRIK) are required for interaction with MAPK1. Residues 23–30 (GNAEVGKS), 71–75 (DMAGH), and 134–137 (NKID) each bind GTP. The J domain occupies 217–273 (DSWDMLGVKPGASRDEVNKAYRKLAVLLHPDKCVAPGSEDAFKAVVNARTALLKNIK).

Belongs to the small GTPase superfamily. Rab family. As to quaternary structure, interacts directly with MAPK1 (wild-type and kinase-deficient forms). Interacts directly (in GTP-bound form) with MAP2K1 (wild-type and kinase-deficient forms). Overexpressed in gastrointestinal cancers; expression correlates with later tumor-node-metastasis stages of colorectal cancers.

The protein resides in the nucleus. In terms of biological role, GTPase which can activate the MEK/ERK pathway and induce cell transformation when overexpressed. May act as a nuclear scaffold for MAPK1, probably by association with MAPK1 nuclear export signal leading to enhanced ERK1/ERK2 signaling. The protein is DnaJ homolog subfamily C member 27 (DNAJC27) of Homo sapiens (Human).